Here is a 403-residue protein sequence, read N- to C-terminus: Acetylornithine aminotransferase (403 aa).

Pyridoxal 5'-phosphate is bound by residues 107 to 108 and Phe140; that span reads GA. Arg143 provides a ligand contact to N(2)-acetyl-L-ornithine. Residue 225-228 coordinates pyridoxal 5'-phosphate; it reads DEVQ. At Lys254 the chain carries N6-(pyridoxal phosphate)lysine. Ser282 contacts N(2)-acetyl-L-ornithine. Position 283 (Thr283) interacts with pyridoxal 5'-phosphate.

This sequence belongs to the class-III pyridoxal-phosphate-dependent aminotransferase family. ArgD subfamily. In terms of assembly, homodimer. Requires pyridoxal 5'-phosphate as cofactor.

The protein localises to the cytoplasm. It carries out the reaction N(2)-acetyl-L-ornithine + 2-oxoglutarate = N-acetyl-L-glutamate 5-semialdehyde + L-glutamate. The protein operates within amino-acid biosynthesis; L-arginine biosynthesis; N(2)-acetyl-L-ornithine from L-glutamate: step 4/4. The sequence is that of Acetylornithine aminotransferase from Vibrio parahaemolyticus serotype O3:K6 (strain RIMD 2210633).